We begin with the raw amino-acid sequence, 173 residues long: Protein FAM180A (173 aa).

Positions Met1–Ala17 are cleaved as a signal peptide.

It belongs to the FAM180 family.

It is found in the secreted. The sequence is that of Protein FAM180A (FAM180A) from Homo sapiens (Human).